A 431-amino-acid chain; its full sequence is Glutamate-1-semialdehyde 2,1-aminomutase (431 aa).

The residue at position 266 (lysine 266) is an N6-(pyridoxal phosphate)lysine.

It belongs to the class-III pyridoxal-phosphate-dependent aminotransferase family. HemL subfamily. In terms of assembly, homodimer. It depends on pyridoxal 5'-phosphate as a cofactor.

The protein resides in the cytoplasm. It carries out the reaction (S)-4-amino-5-oxopentanoate = 5-aminolevulinate. The protein operates within porphyrin-containing compound metabolism; protoporphyrin-IX biosynthesis; 5-aminolevulinate from L-glutamyl-tRNA(Glu): step 2/2. This chain is Glutamate-1-semialdehyde 2,1-aminomutase, found in Wolinella succinogenes (strain ATCC 29543 / DSM 1740 / CCUG 13145 / JCM 31913 / LMG 7466 / NCTC 11488 / FDC 602W) (Vibrio succinogenes).